A 1333-amino-acid chain; its full sequence is Vascular endothelial growth factor receptor 1 (1333 aa).

The N-terminal stretch at 1 to 22 (MVSCWDTAVLPYALLGCLLLTG) is a signal peptide. The Extracellular portion of the chain corresponds to 23–759 (YGSGSKLKVP…QGTSDKSNLE (737 aa)). Ig-like C2-type domains are found at residues 32 to 124 (PELS…AESS), 152 to 215 (GRQL…VNGH), 231 to 328 (LDVQ…TSVH), 334 to 429 (FISV…NVKP), 430 to 550 (QIYE…RNIK), 557 to 656 (PNGF…EVLV), and 662 to 748 (PHLL…AYLT). Cystine bridges form between Cys53–Cys108 and Cys159–Cys208. Asn101, Asn165, Asn197, and Asn252 each carry an N-linked (GlcNAc...) asparagine glycan. Cys253 and Cys312 are disulfide-bonded. Residues Asn324, Asn418, Asn475, Asn517, Asn598, Asn626, Asn667, and Asn714 are each glycosylated (N-linked (GlcNAc...) asparagine). 2 disulfides stabilise this stretch: Cys455-Cys536 and Cys578-Cys637. Residues Cys683 and Cys732 are joined by a disulfide bond. Residues 760 to 781 (LITLTCTCVAATLFWLLLTLFI) form a helical membrane-spanning segment. The Cytoplasmic segment spans residues 782–1333 (RKLKRSSSEV…SVVLYSSPPA (552 aa)). The Protein kinase domain occupies 828 to 1158 (LKLGKSLGRG…ELVEKLGDLL (331 aa)). Residues 834–842 (LGRGAFGKV) and Lys862 contribute to the ATP site. Position 915 is a phosphotyrosine; by autocatalysis (Tyr915). The interval 947 to 983 (EPGLEQGQKPRLDSVSSSSVTSSSFPEDRSVSDVEGD) is disordered. Residues 960–970 (SVSSSSVTSSS) show a composition bias toward low complexity. Asp1022 functions as the Proton acceptor in the catalytic mechanism. Phosphotyrosine; by autocatalysis occurs at positions 1053, 1169, 1213, 1242, 1322, and 1328.

Belongs to the protein kinase superfamily. Tyr protein kinase family. CSF-1/PDGF receptor subfamily. As to quaternary structure, interacts with VEGFA, VEGFB and PGF. Monomer in the absence of bound VEGFA, VEGFB or PGF. Homodimer in the presence of bound VEGFA, VEGFB and PGF. Can also form a heterodimer with KDR. Interacts (tyrosine phosphorylated) with CBL, CRK, GRB2, NCK1, PIK3R1, PLCG, PSEN1 and PTPN11. Probably interacts with PTPRB. Interacts with RACK1. Identified in a complex with CBL and CD2AP. In terms of processing, N-glycosylated. Ubiquitinated after VEGFA-mediated autophosphorylation, leading to proteolytic degradation. Post-translationally, autophosphorylated on tyrosine residues upon ligand binding. Autophosphorylation occurs in trans, i.e. one subunit of the dimeric receptor phosphorylates tyrosine residues on the other subunit. Phosphorylation at Tyr-1169 is important for interaction with PLCG. Phosphorylation at Tyr-1213 is important for interaction with PIK3R1, PTPN11, GRB2, and PLCG. Phosphorylation at Tyr-1328 is important for endocytosis and for interaction with CBL, NCK1 and CRK. Is probably dephosphorylated by PTPRB.

The protein resides in the cell membrane. The protein localises to the endosome. It catalyses the reaction L-tyrosyl-[protein] + ATP = O-phospho-L-tyrosyl-[protein] + ADP + H(+). Present in an inactive conformation in the absence of bound ligand. Binding of VEGFA, VEGFB or PGF leads to dimerization and activation by autophosphorylation on tyrosine residues. Functionally, tyrosine-protein kinase that acts as a cell-surface receptor for VEGFA, VEGFB and PGF, and plays an essential role in the development of embryonic vasculature, the regulation of angiogenesis, cell survival, cell migration, macrophage function, chemotaxis, and cancer cell invasion. Acts as a positive regulator of postnatal retinal hyaloid vessel regression. May play an essential role as a negative regulator of embryonic angiogenesis by inhibiting excessive proliferation of endothelial cells. Can promote endothelial cell proliferation, survival and angiogenesis in adulthood. Its function in promoting cell proliferation seems to be cell-type specific. Promotes PGF-mediated proliferation of endothelial cells, and proliferation of some types of cancer cells, but does not promote proliferation of normal fibroblasts. Has very high affinity for VEGFA and relatively low protein kinase activity; may function as a negative regulator of VEGFA signaling by limiting the amount of free VEGFA and preventing its binding to KDR. Modulates KDR signaling by forming heterodimers with KDR. Ligand binding leads to the activation of several signaling cascades. Activation of PLCG leads to the production of the cellular signaling molecules diacylglycerol and inositol 1,4,5-trisphosphate and the activation of protein kinase C. Mediates phosphorylation of PIK3R1, the regulatory subunit of phosphatidylinositol 3-kinase, leading to the activation of phosphatidylinositol kinase and the downstream signaling pathway. Mediates activation of MAPK1/ERK2, MAPK3/ERK1 and the MAP kinase signaling pathway, as well as of the AKT1 signaling pathway. Phosphorylates SRC, YES1 and PLCG, and may also phosphorylate CBL. Promotes phosphorylation of AKT1 and PTK2/FAK1. This Mus musculus (Mouse) protein is Vascular endothelial growth factor receptor 1 (Flt1).